The primary structure comprises 1327 residues: Kinectin (1327 aa).

At M1 to Y8 the chain is on the cytoplasmic side. Residues F9 to M29 traverse the membrane as a helical; Signal-anchor for type II membrane protein segment. Residues K30–T1327 lie on the Lumenal side of the membrane. Disordered regions lie at residues S49–K181 and L197–K216. An N-linked (GlcNAc...) asparagine glycan is attached at N69. Basic and acidic residues-rich tracts occupy residues R73 to L86 and V111 to A135. Residues S75 and S77 each carry the phosphoserine modification. The segment covering L163 to K173 has biased composition (basic residues). Residues E329–T1327 are a coiled coil. N-linked (GlcNAc...) asparagine glycosylation is present at N1031. The residue at position 1060 (S1060) is a Phosphoserine. A glycan (N-linked (GlcNAc...) asparagine) is linked at N1066. S1290 bears the Phosphoserine mark.

It belongs to the kinectin family. Expressed in all tissues examined including 12-day embryo, adult heart, brain, ovary, kidney, lung, small intestine, spleen, thymus and pancreas.

It is found in the endoplasmic reticulum membrane. Functionally, receptor for kinesin thus involved in kinesin-driven vesicle motility. Accumulates in integrin-based adhesion complexes (IAC) upon integrin aggregation by fibronectin. This Mus musculus (Mouse) protein is Kinectin.